The chain runs to 307 residues: Small ribosomal subunit protein bS1 (307 aa).

3 S1 motif domains span residues 32–101 (GDTV…LSIR), 119–183 (DATV…LSHR), and 197–265 (GEVV…LSTK).

Belongs to the bacterial ribosomal protein bS1 family.

Functionally, binds mRNA. This is Small ribosomal subunit protein bS1 (rpsA) from Synechococcus sp. (strain ATCC 27144 / PCC 6301 / SAUG 1402/1) (Anacystis nidulans).